A 335-amino-acid polypeptide reads, in one-letter code: Lipase chaperone (335 aa).

Residues 1–21 traverse the membrane as a helical segment; the sequence is MSGSILLLPLAIALGLGFFIA.

This sequence belongs to the lipase chaperone family.

It localises to the cell inner membrane. In terms of biological role, may be involved in the folding of the extracellular lipase during its passage through the periplasm. The polypeptide is Lipase chaperone (Stutzerimonas stutzeri (strain A1501) (Pseudomonas stutzeri)).